Reading from the N-terminus, the 391-residue chain is Probable protein arginine N-methyltransferase 6.1 (391 aa).

The disordered stretch occupies residues 1 to 35 (MLPSHLNGHSPLARRCPRLSAASPPATGDSDAAAA). The span at 20–35 (SAASPPATGDSDAAAA) shows a compositional bias: low complexity. An SAM-dependent MTase PRMT-type domain is found at 45–391 (DRIYFQSYSH…QTLVKDYAMR (347 aa)). The S-adenosyl-L-methionine site is built by His58, Arg67, Gly91, Glu113, and Glu142. Catalysis depends on residues Glu156 and Glu165.

Belongs to the class I-like SAM-binding methyltransferase superfamily. Protein arginine N-methyltransferase family. PRMT6 subfamily.

Arginine methyltransferase that can both catalyze the formation of omega-N monomethylarginine (MMA) and asymmetrical dimethylarginine (aDMA). This chain is Probable protein arginine N-methyltransferase 6.1 (PRMT6.1), found in Oryza sativa subsp. japonica (Rice).